The following is an 887-amino-acid chain: Alanine--tRNA ligase (887 aa).

Zn(2+) is bound by residues His-573, His-577, Cys-676, and His-680.

This sequence belongs to the class-II aminoacyl-tRNA synthetase family. Requires Zn(2+) as cofactor.

The protein localises to the cytoplasm. The catalysed reaction is tRNA(Ala) + L-alanine + ATP = L-alanyl-tRNA(Ala) + AMP + diphosphate. In terms of biological role, catalyzes the attachment of alanine to tRNA(Ala) in a two-step reaction: alanine is first activated by ATP to form Ala-AMP and then transferred to the acceptor end of tRNA(Ala). Also edits incorrectly charged Ser-tRNA(Ala) and Gly-tRNA(Ala) via its editing domain. The sequence is that of Alanine--tRNA ligase from Corynebacterium jeikeium (strain K411).